We begin with the raw amino-acid sequence, 1032 residues long: MAEPSAATQSHSISSSSFGAEPSAPGGGGSPGACPALGTKSCSSSCADSFVSSSSSQPVSLFSTSQEGLSSLCSDEPSSEIMTSSFLSSSEIHNTGLTILHGEKSHVLGSQPILAKEGKDHLDLLDMKKMEKPQGTSNNVSDSSVSLAAGVHCDRPSIPASFPEHPAFLSKKIGQVEEQIDKETKNPNGVSSREAKTALDADDRFTLLTAQKPPTEYSKVEGIYTYSLSPSKVSGDDVIEKDSPESPFEVIIDKAAFDKEFKDSYKESTDDFGSWSVHTDKESSEDISETNDKLFPLRNKEAGRYPMSALLSRQFSHTNAALEEVSRCVNDMHNFTNEILTWDLVPQVKQQTDKSSDCITKTTGLDMSEYNSEIPVVNLKTSTHQKTPVCSIDGSTPITKSTGDWAEASLQQENAITGKPVPDSLNSTKEFSIKGVQGNMQKQDDTLAELPGSPPEKCDSLGSGVATVKVVLPDDHLKDEMDWQSSALGEITEADSSGESDDTVIEDITADTSFENNKIQAEKPVSIPSAVVKTGEREIKEIPSCEREEKTSKNFEELVSDSELHQDQPDILGRSPASEAACSKVPDTNVSLEDVSEVAPEKPITTENPKLPSTVSPNVFNETEFSLNVTTSAYLESLHGKNVKHIDDSSPEDLIAAFTETRDKGIVDSERNAFKAISEKMTDFKTTPPVEVLHENESGGSEIKDIGSKYSEQSKETNGSEPLGVFPTQGTPVASLDLEQEQLTIKALKELGERQVEKSTSAQRDAELPSEEVLKQTFTFAPESWPQRSYDILERNVKNGSDLGISQKPITIRETTRVDAVSSLSKTELVKKHVLARLLTDFSVHDLIFWRDVKKTGFVFGTTLIMLLSLAAFSVISVVSYLILALLSVTISFRIYKSVIQAVQKSEEGHPFKAYLDVDITLSSEAFHNYMNAAMVHINRALKLIIRLFLVEDLVDSLKLAVFMWLMTYVGAVFNGITLLILAELLIFSVPIVYEKYKTQIDHYVGIARDQTKSIVEKIQAKLPGIAKKKAE.

A compositionally biased stretch (low complexity) spans methionine 1 to alanine 24. The interval methionine 1–leucine 61 is disordered. Alanine 2 carries the post-translational modification N-acetylalanine. Topologically, residues alanine 2–threonine 863 are cytoplasmic. A Phosphoserine modification is found at serine 30. Residues glycine 32–leucine 61 show a composition bias toward low complexity. Phosphoserine is present on residues serine 229, serine 243, serine 246, serine 283, serine 316, and serine 453. The segment covering cysteine 545 to glutamine 568 has biased composition (basic and acidic residues). The interval cysteine 545–proline 617 is disordered. The span at threonine 605–proline 617 shows a compositional bias: polar residues. A phosphoserine mark is found at serine 649 and serine 650. Positions asparagine 696–lysine 715 are enriched in basic and acidic residues. The tract at residues asparagine 696–phenylalanine 726 is disordered. At serine 735 the chain carries Phosphoserine. The Reticulon domain occupies valine 844–glutamate 1032. The helical intramembrane region spans leucine 864–leucine 887. The Cytoplasmic portion of the chain corresponds to serine 888 to arginine 947. Positions leucine 948–threonine 968 form an intramembrane region, helical. The Cytoplasmic portion of the chain corresponds to tyrosine 969 to alanine 972. An intramembrane region (helical) is located at residues valine 973 to valine 993. The interaction with FADD stretch occupies residues isoleucine 987–glutamate 1032. Residues tyrosine 994–glutamate 1032 lie on the Cytoplasmic side of the membrane. Residues glutamine 1000 to aspartate 1002 form an interaction with BACE1 region.

Homodimer. Interacts with ATL1. Interacts with RTN4. Isoform 3 interacts with BACE1, BACE2, BCL2 and FADD. Interacts with ATL2. Interacts with TMEM33. Interacts with ZFYVE27 and with KIF5A in a ZFYVE27-dependent manner. Interacts with RIGI. Interacts with TRIM25. In terms of assembly, (Microbial infection) Interacts with Coxsackievirus A16, enterovirus 71 and poliovirus P2C proteins. As to quaternary structure, (Microbial infection) Interacts with West Nile virus protein NS4A. In terms of tissue distribution, isoform 3 is widely expressed, with highest levels in brain, where it is enriched in neuronal cell bodies from gray matter (at protein level). Three times more abundant in macula than in peripheral retina. Isoform 1 is expressed at high levels in brain and at low levels in skeletal muscle. Isoform 2 is only found in melanoma.

The protein localises to the endoplasmic reticulum membrane. It is found in the golgi apparatus membrane. Its function is as follows. May be involved in membrane trafficking in the early secretory pathway. Inhibits BACE1 activity and amyloid precursor protein processing. May induce caspase-8 cascade and apoptosis. May favor BCL2 translocation to the mitochondria upon endoplasmic reticulum stress. Induces the formation of endoplasmic reticulum tubules. Also acts as an inflammation-resolving regulator by interacting with both TRIM25 and RIGI, subsequently impairing RIGI 'Lys-63'-linked polyubiquitination leading to IRF3 and NF-kappa-B inhibition. In terms of biological role, (Microbial infection) Plays a positive role in viral replication and pathogenesis of enteroviruses. This chain is Reticulon-3 (RTN3), found in Homo sapiens (Human).